The primary structure comprises 57 residues: Dendroaspis polylepis MT9 (57 aa).

4 disulfides stabilise this stretch: Cys3/Cys22, Cys17/Cys36, Cys38/Cys49, and Cys50/Cys55.

Belongs to the three-finger toxin family. Short-chain subfamily. Expressed by the venom gland.

It is found in the secreted. When tested on muscarinic GPCR, specifically antagonizes the type 2 receptor (CHRM2) subtype (Ki/Kd=120-399 nM). Ex vivo, it reverses the M2R-agonist-induced relaxation in rat and human arteries. The polypeptide is Dendroaspis polylepis MT9 (Dendroaspis polylepis polylepis (Black mamba)).